The following is an 861-amino-acid chain: DNA mismatch repair protein MutS (861 aa).

Residue 616 to 623 (GPNMGGKS) participates in ATP binding.

It belongs to the DNA mismatch repair MutS family.

Functionally, this protein is involved in the repair of mismatches in DNA. It is possible that it carries out the mismatch recognition step. This protein has a weak ATPase activity. This is DNA mismatch repair protein MutS from Haemophilus influenzae (strain PittEE).